Here is a 312-residue protein sequence, read N- to C-terminus: GDP-L-fucose synthase (312 aa).

Residue G11–G17 coordinates NADP(+). The active-site Proton donor/acceptor is the Y136. Residues K140 and H179 each coordinate NADP(+). K187, W202, and R209 together coordinate substrate.

It belongs to the NAD(P)-dependent epimerase/dehydratase family. Fucose synthase subfamily.

The enzyme catalyses GDP-beta-L-fucose + NADP(+) = GDP-4-dehydro-alpha-D-rhamnose + NADPH + H(+). Its pathway is nucleotide-sugar biosynthesis; GDP-L-fucose biosynthesis via de novo pathway; GDP-L-fucose from GDP-alpha-D-mannose: step 2/2. Its function is as follows. Catalyzes the two-step NADP-dependent conversion of GDP-4-dehydro-6-deoxy-D-mannose to GDP-fucose, involving an epimerase and a reductase reaction. This Azorhizobium caulinodans (strain ATCC 43989 / DSM 5975 / JCM 20966 / LMG 6465 / NBRC 14845 / NCIMB 13405 / ORS 571) protein is GDP-L-fucose synthase.